Consider the following 347-residue polypeptide: Transcription termination/antitermination protein NusA (347 aa).

Residues Gly112–Thr184 form the S1 motif domain. Residues Ala287–Arg347 enclose the KH domain. The disordered stretch occupies residues Asp322 to Arg347.

This sequence belongs to the NusA family. In terms of assembly, monomer. Binds directly to the core enzyme of the DNA-dependent RNA polymerase and to nascent RNA.

It is found in the cytoplasm. Its function is as follows. Participates in both transcription termination and antitermination. This Mycobacterium bovis (strain ATCC BAA-935 / AF2122/97) protein is Transcription termination/antitermination protein NusA.